Here is a 237-residue protein sequence, read N- to C-terminus: Ubiquinone biosynthesis O-methyltransferase (237 aa).

Residues Arg38, Gly57, Asp78, and Met122 each coordinate S-adenosyl-L-methionine.

It belongs to the methyltransferase superfamily. UbiG/COQ3 family.

It carries out the reaction a 3-demethylubiquinol + S-adenosyl-L-methionine = a ubiquinol + S-adenosyl-L-homocysteine + H(+). The catalysed reaction is a 3-(all-trans-polyprenyl)benzene-1,2-diol + S-adenosyl-L-methionine = a 2-methoxy-6-(all-trans-polyprenyl)phenol + S-adenosyl-L-homocysteine + H(+). It participates in cofactor biosynthesis; ubiquinone biosynthesis. Functionally, O-methyltransferase that catalyzes the 2 O-methylation steps in the ubiquinone biosynthetic pathway. The sequence is that of Ubiquinone biosynthesis O-methyltransferase from Methylococcus capsulatus (strain ATCC 33009 / NCIMB 11132 / Bath).